Here is a 270-residue protein sequence, read N- to C-terminus: Urease accessory protein UreD (270 aa).

This sequence belongs to the UreD family. In terms of assembly, ureD, UreF and UreG form a complex that acts as a GTP-hydrolysis-dependent molecular chaperone, activating the urease apoprotein by helping to assemble the nickel containing metallocenter of UreC. The UreE protein probably delivers the nickel.

The protein localises to the cytoplasm. Functionally, required for maturation of urease via the functional incorporation of the urease nickel metallocenter. In Actinobacillus pleuropneumoniae serotype 7 (strain AP76), this protein is Urease accessory protein UreD.